A 145-amino-acid chain; its full sequence is D-aminoacyl-tRNA deacylase (145 aa).

A Gly-cisPro motif, important for rejection of L-amino acids motif is present at residues 137-138 (GP).

This sequence belongs to the DTD family. Homodimer.

The protein localises to the cytoplasm. It carries out the reaction glycyl-tRNA(Ala) + H2O = tRNA(Ala) + glycine + H(+). The enzyme catalyses a D-aminoacyl-tRNA + H2O = a tRNA + a D-alpha-amino acid + H(+). Its function is as follows. An aminoacyl-tRNA editing enzyme that deacylates mischarged D-aminoacyl-tRNAs. Also deacylates mischarged glycyl-tRNA(Ala), protecting cells against glycine mischarging by AlaRS. Acts via tRNA-based rather than protein-based catalysis; rejects L-amino acids rather than detecting D-amino acids in the active site. By recycling D-aminoacyl-tRNA to D-amino acids and free tRNA molecules, this enzyme counteracts the toxicity associated with the formation of D-aminoacyl-tRNA entities in vivo and helps enforce protein L-homochirality. The protein is D-aminoacyl-tRNA deacylase of Pseudomonas entomophila (strain L48).